A 400-amino-acid polypeptide reads, in one-letter code: Enoyl-[acyl-carrier-protein] reductase [NADH] (400 aa).

Residues 48-53 (GASTGY), 74-75 (FE), 111-112 (DA), and 139-140 (LA) each bind NAD(+). Tyrosine 225 lines the substrate pocket. Tyrosine 235 serves as the catalytic Proton donor. NAD(+) is bound by residues lysine 244 and 273–275 (VVT).

It belongs to the TER reductase family. As to quaternary structure, monomer.

It catalyses the reaction a 2,3-saturated acyl-[ACP] + NAD(+) = a (2E)-enoyl-[ACP] + NADH + H(+). It participates in lipid metabolism; fatty acid biosynthesis. Its function is as follows. Involved in the final reduction of the elongation cycle of fatty acid synthesis (FAS II). Catalyzes the reduction of a carbon-carbon double bond in an enoyl moiety that is covalently linked to an acyl carrier protein (ACP). The protein is Enoyl-[acyl-carrier-protein] reductase [NADH] of Burkholderia cenocepacia (strain ATCC BAA-245 / DSM 16553 / LMG 16656 / NCTC 13227 / J2315 / CF5610) (Burkholderia cepacia (strain J2315)).